The following is a 396-amino-acid chain: 12-oxophytodienoate reductase 3 (396 aa).

FMN-binding positions include Pro31–Thr33, Gly64, and Gln106. Position 185–188 (His185–His188) interacts with substrate. Tyr190 (proton donor) is an active-site residue. Arg237 serves as a coordination point for FMN. Arg283 provides a ligand contact to substrate. FMN contacts are provided by residues Gly321 and Gly342–Arg343. The interval Gly342 to Arg343 is FMN. Positions Ser394 to Leu396 match the Microbody targeting signal motif.

This sequence belongs to the NADH:flavin oxidoreductase/NADH oxidase family. The cofactor is FMN. Expressed in roots and to a lower extent in leaves and flowers.

It is found in the peroxisome. The enzyme catalyses (1S,2S)-OPC-8 + NADP(+) = (9S,13S,15Z)-12-oxophyto-10,15-dienoate + NADPH + H(+). It functions in the pathway lipid metabolism; oxylipin biosynthesis. Its function is as follows. Specifically cleaves olefinic bonds in cyclic enones. Involved in the biosynthesis of jasmonic acid (JA) and perhaps in biosynthesis or metabolism of other oxylipin signaling moleclules. It is required for the spatial and temporal regulation of JA levels during dehiscence of anthers, promoting the stomium degeneration program. In vitro, reduces 9S,13S-12-oxophytodienoic acid (9S,13S-OPDA) and 9R,13R-OPDA to 9S,13S-OPC-8:0 and 9R,13R-OPC-8:0, respectively. The polypeptide is 12-oxophytodienoate reductase 3 (OPR3) (Solanum lycopersicum (Tomato)).